The chain runs to 104 residues: MAIADVTIIPIGTETPSVSAYVADVQKILEGYQAEGKIKYQLTPMNTLIEGELSDLFAVIQAIHEAPFQKGLHRVATNIRIDDRRDKKTTLESKIESVNKHLQP.

Belongs to the UPF0045 family.

This Bacillus subtilis (strain 168) protein is UPF0045 protein YqgV (yqgV).